Here is a 607-residue protein sequence, read N- to C-terminus: UvrABC system protein C (607 aa).

In terms of domain architecture, GIY-YIG spans 12 to 91 (DSPGVYLYKD…IKRYRPRYNI (80 aa)). Positions 200–235 (ENLIKKLKKEMAIASDNLEFERAAKLRDQILALEKI) constitute a UVR domain.

It belongs to the UvrC family. Interacts with UvrB in an incision complex.

It is found in the cytoplasm. In terms of biological role, the UvrABC repair system catalyzes the recognition and processing of DNA lesions. UvrC both incises the 5' and 3' sides of the lesion. The N-terminal half is responsible for the 3' incision and the C-terminal half is responsible for the 5' incision. The protein is UvrABC system protein C of Carboxydothermus hydrogenoformans (strain ATCC BAA-161 / DSM 6008 / Z-2901).